Reading from the N-terminus, the 256-residue chain is NifU-like protein, mitochondrial (256 aa).

The short motif at 196 to 199 (CTSC) is the CxxC motif element.

The protein belongs to the NifU family. Homodimer; in absence of BOL3, probably bridged by an iron-sulfure cluster. Interacts with BOL3. Interacts with apo-target proteins, such as ACO1, LYS4, ACO2 and SDH2.

It is found in the mitochondrion matrix. In terms of biological role, involved in iron homeostasis within the mitochondrion where it is involved in the assembly of iron-sulfur proteins. Together with BOL3, required during the last step of iron-sulfur protein assembly when the iron-sulfur cluster is inserted into the target protein. Required for protecting iron sulfur clusters from oxidative damage. This is NifU-like protein, mitochondrial (NFU1) from Saccharomyces cerevisiae (strain ATCC 204508 / S288c) (Baker's yeast).